Reading from the N-terminus, the 514-residue chain is Cardiolipin synthase 2 (514 aa).

A run of 3 helical transmembrane segments spans residues Leu7–Val27, Ile41–Phe61, and Leu71–Phe91. 2 consecutive PLD phosphodiesterase domains span residues Ile249–Tyr276 and Glu427–Ser454. Residues His254, Lys256, Asp261, His432, Lys434, and Asp439 contribute to the active site.

It belongs to the phospholipase D family. Cardiolipin synthase subfamily.

It localises to the cell membrane. The catalysed reaction is 2 a 1,2-diacyl-sn-glycero-3-phospho-(1'-sn-glycerol) = a cardiolipin + glycerol. Catalyzes the reversible phosphatidyl group transfer from one phosphatidylglycerol molecule to another to form cardiolipin (CL) (diphosphatidylglycerol) and glycerol. This Bacillus cereus (strain ATCC 14579 / DSM 31 / CCUG 7414 / JCM 2152 / NBRC 15305 / NCIMB 9373 / NCTC 2599 / NRRL B-3711) protein is Cardiolipin synthase 2 (cls2).